An 895-amino-acid polypeptide reads, in one-letter code: Eukaryotic translation initiation factor 3 subunit C (895 aa).

The segment at 1-108 (MSGFFRKVGD…DSDSEEEVKK (108 aa)) is disordered. Composition is skewed to acidic residues over residues 11-31 (SDSESDISSSEEELSELESGD) and 52-75 (DDSDSDDDDSDDDDQDSLDSDDDN). The 175-residue stretch at 638–812 (FHMHINLELL…NVVSFHRLEL (175 aa)) folds into the PCI domain. The segment covering 838 to 860 (DAKLGEGKEQRSGAGGERGDREG) has biased composition (basic and acidic residues). The disordered stretch occupies residues 838–895 (DAKLGEGKEQRSGAGGERGDREGGQPGGRRERRGGSAARGRGRGRGRAQQFQALGQKV). Residues 884-895 (RAQQFQALGQKV) are compositionally biased toward low complexity.

Belongs to the eIF-3 subunit C family. As to quaternary structure, component of the eukaryotic translation initiation factor 3 (eIF-3) complex.

It localises to the cytoplasm. Functionally, component of the eukaryotic translation initiation factor 3 (eIF-3) complex, which is involved in protein synthesis of a specialized repertoire of mRNAs and, together with other initiation factors, stimulates binding of mRNA and methionyl-tRNAi to the 40S ribosome. The eIF-3 complex specifically targets and initiates translation of a subset of mRNAs involved in cell proliferation. This Mycosarcoma maydis (Corn smut fungus) protein is Eukaryotic translation initiation factor 3 subunit C.